The following is a 274-amino-acid chain: Formamidopyrimidine-DNA glycosylase (274 aa).

The active-site Schiff-base intermediate with DNA is the Pro2. Catalysis depends on Glu3, which acts as the Proton donor. Lys57 serves as the catalytic Proton donor; for beta-elimination activity. Residues His92, Arg111, and Lys152 each coordinate DNA. Residues 237 to 271 (QVYGRKGEECNDCGSIIEAKVIGQRNSFYCPKCQR) form an FPG-type zinc finger. Arg261 serves as the catalytic Proton donor; for delta-elimination activity.

Belongs to the FPG family. In terms of assembly, monomer. It depends on Zn(2+) as a cofactor.

It carries out the reaction Hydrolysis of DNA containing ring-opened 7-methylguanine residues, releasing 2,6-diamino-4-hydroxy-5-(N-methyl)formamidopyrimidine.. The enzyme catalyses 2'-deoxyribonucleotide-(2'-deoxyribose 5'-phosphate)-2'-deoxyribonucleotide-DNA = a 3'-end 2'-deoxyribonucleotide-(2,3-dehydro-2,3-deoxyribose 5'-phosphate)-DNA + a 5'-end 5'-phospho-2'-deoxyribonucleoside-DNA + H(+). In terms of biological role, involved in base excision repair of DNA damaged by oxidation or by mutagenic agents. Acts as a DNA glycosylase that recognizes and removes damaged bases. Has a preference for oxidized purines, such as 7,8-dihydro-8-oxoguanine (8-oxoG). Has AP (apurinic/apyrimidinic) lyase activity and introduces nicks in the DNA strand. Cleaves the DNA backbone by beta-delta elimination to generate a single-strand break at the site of the removed base with both 3'- and 5'-phosphates. The sequence is that of Formamidopyrimidine-DNA glycosylase from Glaesserella parasuis serovar 5 (strain SH0165) (Haemophilus parasuis).